We begin with the raw amino-acid sequence, 297 residues long: Carbamate kinase (297 aa).

This sequence belongs to the carbamate kinase family.

The protein localises to the cytoplasm. The catalysed reaction is hydrogencarbonate + NH4(+) + ATP = carbamoyl phosphate + ADP + H2O + H(+). The enzyme catalyses carbamate + ATP = carbamoyl phosphate + ADP. It catalyses the reaction hydrogencarbonate + NH4(+) = carbamate + H2O + H(+). Its pathway is nitrogen metabolism; (S)-allantoin degradation. Kinase involved in the anaerobic nitrogen utilization via the assimilation of allantoin. Catalyzes the transfer of a phosphate group from carbamoyl phosphate to ADP to produce ATP and leave carbamate, which spontaneously hydrolyzes to ammonia and hydrogencarbonate. The sequence is that of Carbamate kinase from Escherichia coli O157:H7.